A 505-amino-acid chain; its full sequence is UDP-N-acetylmuramyl-tripeptide synthetase (505 aa).

S35 lines the UDP-N-acetyl-alpha-D-muramoyl-L-alanyl-D-glutamate pocket. 118-124 (GTDGKSS) is a binding site for ATP. UDP-N-acetyl-alpha-D-muramoyl-L-alanyl-D-glutamate contacts are provided by residues 163–164 (ST), T190, and R200. K232 is modified (N6-carboxylysine).

It belongs to the MurCDEF family. MurE subfamily. In terms of processing, carboxylation is probably crucial for Mg(2+) binding and, consequently, for the gamma-phosphate positioning of ATP.

The protein resides in the cytoplasm. The protein operates within cell wall biogenesis; peptidoglycan biosynthesis. In terms of biological role, catalyzes the addition of an amino acid to the nucleotide precursor UDP-N-acetylmuramoyl-L-alanyl-D-glutamate (UMAG) in the biosynthesis of bacterial cell-wall peptidoglycan. This chain is UDP-N-acetylmuramyl-tripeptide synthetase, found in Borreliella afzelii (strain PKo) (Borrelia afzelii).